Reading from the N-terminus, the 588-residue chain is Thioredoxin domain-containing protein 3 (588 aa).

The region spanning 2 to 119 is the Thioredoxin domain; that stretch reads ASKKREVQLQ…VINLIDEERK (118 aa). Cys-39 and Cys-42 form a disulfide bridge. NDK regions lie at residues 157–257, 315–455, and 456–588; these read IAII…DQPE, LEKT…STLG, and LIKP…PEEN. Positions 230 to 261 are disordered; it reads GSKHNPPSEETEPQTDTEPNERSEDQPEVEAQ.

In the C-terminal section; belongs to the NDK family. As to quaternary structure, monomer. Testis-specific. Expressed only in primary spermatocytes and round spermatids.

Its subcellular location is the cytoplasm. Functionally, probably required during the final stages of sperm tail maturation in the testis and/or epididymis, where extensive disulfide bonding of fibrous sheath (FS) proteins occurs. In vitro, it has neither nucleoside diphosphate kinase (NDPK) activity nor reducing activity on disulfide bonds. Exhibits a 3'-5' exonuclease activity with a preference for single-stranded DNA, suggesting roles in DNA proofreading and repair. This is Thioredoxin domain-containing protein 3 from Homo sapiens (Human).